We begin with the raw amino-acid sequence, 847 residues long: Putative disease resistance RPP13-like protein 3 (847 aa).

Positions Leu-24–Ile-41 form a coiled coil. The NB-ARC domain occupies Thr-143 to Glu-453. Gly-192 to Thr-199 is an ATP binding site.

It belongs to the disease resistance NB-LRR family. RPP13 subfamily.

Potential disease resistance protein. This is Putative disease resistance RPP13-like protein 3 (RPP13L3) from Arabidopsis thaliana (Mouse-ear cress).